Here is a 342-residue protein sequence, read N- to C-terminus: Pyridoxal 4-dehydrogenase (342 aa).

The active site involves D56. Y61 functions as the Proton donor in the catalytic mechanism. The active site involves K86. 245-255 contributes to the NADP(+) binding site; that stretch reads GVFNSGILAAP.

It belongs to the aldo/keto reductase family. As to quaternary structure, homodimer.

It carries out the reaction pyridoxal + NAD(+) = 4-pyridoxolactone + NADH + H(+). Its pathway is cofactor degradation; B6 vitamer degradation; 4-pyridoxate from pyridoxal: step 1/2. The chain is Pyridoxal 4-dehydrogenase (pld1) from Microbacterium luteolum (Aureobacterium luteolum).